We begin with the raw amino-acid sequence, 186 residues long: TATA-box-binding protein D (186 aa).

Tandem repeats lie at residues 10 to 86 and 101 to 179.

Belongs to the TBP family.

General factor that plays a role in the activation of archaeal genes transcribed by RNA polymerase. Binds specifically to the TATA box promoter element which lies close to the position of transcription initiation. This Halobacterium salinarum (strain ATCC 700922 / JCM 11081 / NRC-1) (Halobacterium halobium) protein is TATA-box-binding protein D (tbpD).